The primary structure comprises 853 residues: Auxin response factor 23 (853 aa).

A disordered region spans residues P118–H141. The segment at residues F149–M251 is a DNA-binding region (TF-B3). Disordered regions lie at residues E422–M484 and P647–S723. The segment covering P425–K455 has biased composition (polar residues). Residues E672–D686 show a composition bias toward basic and acidic residues. Residues P706–S723 are compositionally biased toward polar residues. The 85-residue stretch at R725–E809 folds into the PB1 domain. The segment at P815–C853 is disordered. Polar residues predominate over residues L843–C853.

The protein belongs to the ARF family. As to quaternary structure, homodimers and heterodimers. Interacts with CRL1. In terms of tissue distribution, expressed in roots, culms, leaves and young panicles.

Its subcellular location is the nucleus. Auxin response factors (ARFs) are transcriptional factors that bind specifically to the DNA sequence 5'-TGTCTC-3' found in the auxin-responsive promoter elements (AuxREs). This chain is Auxin response factor 23 (ARF23), found in Oryza sativa subsp. japonica (Rice).